The sequence spans 455 residues: Major capsid protein (455 aa).

This sequence belongs to the ascoviridae capsid protein family.

The protein resides in the virion. In terms of biological role, major protein of the capsid. In Heliothis virescens ascovirus 3e (HvAV-3e), this protein is Major capsid protein (MCP).